A 506-amino-acid polypeptide reads, in one-letter code: UDP-N-acetylmuramoyl-L-alanyl-D-glutamate--2,6-diaminopimelate ligase (506 aa).

Ser-42 contributes to the UDP-N-acetyl-alpha-D-muramoyl-L-alanyl-D-glutamate binding site. 125-131 is a binding site for ATP; that stretch reads GTSGKTT. UDP-N-acetyl-alpha-D-muramoyl-L-alanyl-D-glutamate contacts are provided by residues 166–167, Ser-193, and Arg-201; that span reads TT. Position 233 is an N6-carboxylysine (Lys-233). Residues Arg-395, 419-422, Gly-475, and Glu-479 each bind meso-2,6-diaminopimelate; that span reads DNPR. The short motif at 419–422 is the Meso-diaminopimelate recognition motif element; sequence DNPR.

It belongs to the MurCDEF family. MurE subfamily. Requires Mg(2+) as cofactor. Post-translationally, carboxylation is probably crucial for Mg(2+) binding and, consequently, for the gamma-phosphate positioning of ATP.

It is found in the cytoplasm. It catalyses the reaction UDP-N-acetyl-alpha-D-muramoyl-L-alanyl-D-glutamate + meso-2,6-diaminopimelate + ATP = UDP-N-acetyl-alpha-D-muramoyl-L-alanyl-gamma-D-glutamyl-meso-2,6-diaminopimelate + ADP + phosphate + H(+). Its pathway is cell wall biogenesis; peptidoglycan biosynthesis. In terms of biological role, catalyzes the addition of meso-diaminopimelic acid to the nucleotide precursor UDP-N-acetylmuramoyl-L-alanyl-D-glutamate (UMAG) in the biosynthesis of bacterial cell-wall peptidoglycan. The protein is UDP-N-acetylmuramoyl-L-alanyl-D-glutamate--2,6-diaminopimelate ligase of Streptomyces coelicolor (strain ATCC BAA-471 / A3(2) / M145).